The following is a 74-amino-acid chain: Protein SlyX homolog (74 aa).

This sequence belongs to the SlyX family.

The protein is Protein SlyX homolog of Aliivibrio salmonicida (strain LFI1238) (Vibrio salmonicida (strain LFI1238)).